A 139-amino-acid polypeptide reads, in one-letter code: Transcription antitermination protein NusB (139 aa).

The protein belongs to the NusB family.

Its function is as follows. Involved in transcription antitermination. Required for transcription of ribosomal RNA (rRNA) genes. Binds specifically to the boxA antiterminator sequence of the ribosomal RNA (rrn) operons. The chain is Transcription antitermination protein NusB from Baumannia cicadellinicola subsp. Homalodisca coagulata.